The primary structure comprises 127 residues: MKEQTEVGKLKEGKYLLVDDEPCKILSISVSKPGKHGAAKARLDVVGIFDGVKRSIVQPVSAKVYAPIVERRNAQVISIAGNVVQMMDLESFENFEVTVTDDVKDRIEAGKETMYIYSMEKRKIDFL.

Lys35 bears the Hypusine mark.

This sequence belongs to the eIF-5A family.

The protein localises to the cytoplasm. Functions by promoting the formation of the first peptide bond. The protein is Translation initiation factor 5A of Methanospirillum hungatei JF-1 (strain ATCC 27890 / DSM 864 / NBRC 100397 / JF-1).